A 371-amino-acid chain; its full sequence is Glutamate 5-kinase (371 aa).

K11 is a binding site for ATP. 3 residues coordinate substrate: S52, D139, and N151. Residues T171–D172 and T213–K219 each bind ATP. The region spanning E278–E356 is the PUA domain.

The protein belongs to the glutamate 5-kinase family.

It localises to the cytoplasm. It carries out the reaction L-glutamate + ATP = L-glutamyl 5-phosphate + ADP. The protein operates within amino-acid biosynthesis; L-proline biosynthesis; L-glutamate 5-semialdehyde from L-glutamate: step 1/2. Catalyzes the transfer of a phosphate group to glutamate to form L-glutamate 5-phosphate. In Synechococcus sp. (strain JA-3-3Ab) (Cyanobacteria bacterium Yellowstone A-Prime), this protein is Glutamate 5-kinase.